The chain runs to 214 residues: Adenylate kinase (214 aa).

10–15 (GAGKGT) contributes to the ATP binding site. The NMP stretch occupies residues 30–59 (STGDMLRAAIKEGTPLGLEAKKVMDAGQLI). AMP-binding positions include T31, R36, 57-59 (QLI), 85-88 (GFPR), and Q92. Residues 122 to 159 (GRRVHPGSGRVYHVVYNPPKVADKDNETGEELIIRADD) are LID. ATP is bound by residues R123 and 132-133 (VY). Positions 156 and 167 each coordinate AMP. Q200 is a binding site for ATP.

Belongs to the adenylate kinase family. In terms of assembly, monomer.

It localises to the cytoplasm. The catalysed reaction is AMP + ATP = 2 ADP. Its pathway is purine metabolism; AMP biosynthesis via salvage pathway; AMP from ADP: step 1/1. Functionally, catalyzes the reversible transfer of the terminal phosphate group between ATP and AMP. Plays an important role in cellular energy homeostasis and in adenine nucleotide metabolism. The polypeptide is Adenylate kinase (Pseudoalteromonas translucida (strain TAC 125)).